The chain runs to 486 residues: Glutamyl-tRNA(Gln) amidotransferase subunit A (486 aa).

Active-site charge relay system residues include Lys-74 and Ser-149. Ser-173 acts as the Acyl-ester intermediate in catalysis.

This sequence belongs to the amidase family. GatA subfamily. Heterotrimer of A, B and C subunits.

The catalysed reaction is L-glutamyl-tRNA(Gln) + L-glutamine + ATP + H2O = L-glutaminyl-tRNA(Gln) + L-glutamate + ADP + phosphate + H(+). In terms of biological role, allows the formation of correctly charged Gln-tRNA(Gln) through the transamidation of misacylated Glu-tRNA(Gln) in organisms which lack glutaminyl-tRNA synthetase. The reaction takes place in the presence of glutamine and ATP through an activated gamma-phospho-Glu-tRNA(Gln). The protein is Glutamyl-tRNA(Gln) amidotransferase subunit A of Prochlorococcus marinus (strain NATL2A).